The primary structure comprises 195 residues: Probable GTP-binding protein EngB (195 aa).

Residues Gly22 to Glu195 form the EngB-type G domain. Residues Gly30–Ser37, Gly57–Thr61, Asp75–Gly78, Thr142–Asp145, and Phe174–Ser176 each bind GTP. Residues Ser37 and Thr59 each contribute to the Mg(2+) site.

This sequence belongs to the TRAFAC class TrmE-Era-EngA-EngB-Septin-like GTPase superfamily. EngB GTPase family. It depends on Mg(2+) as a cofactor.

Functionally, necessary for normal cell division and for the maintenance of normal septation. The sequence is that of Probable GTP-binding protein EngB from Geobacillus thermodenitrificans (strain NG80-2).